Here is a 241-residue protein sequence, read N- to C-terminus: Orotidine 5'-phosphate decarboxylase (241 aa).

Substrate contacts are provided by residues Asp15, Lys37, 64–73 (DLKYHDIPNT), Thr126, Arg187, Gln196, Gly216, and Arg217. Catalysis depends on Lys66, which acts as the Proton donor.

The protein belongs to the OMP decarboxylase family. Type 1 subfamily. As to quaternary structure, homodimer.

It carries out the reaction orotidine 5'-phosphate + H(+) = UMP + CO2. It participates in pyrimidine metabolism; UMP biosynthesis via de novo pathway; UMP from orotate: step 2/2. In terms of biological role, catalyzes the decarboxylation of orotidine 5'-monophosphate (OMP) to uridine 5'-monophosphate (UMP). This chain is Orotidine 5'-phosphate decarboxylase, found in Geotalea uraniireducens (strain Rf4) (Geobacter uraniireducens).